The primary structure comprises 286 residues: 3-hydroxyanthranilate 3,4-dioxygenase (286 aa).

Residues 1–160 form a domain A (catalytic) region; that stretch reads MERRLGVRAW…SEQYRTGKPI (160 aa). Arg-43 is a binding site for O2. 3 residues coordinate Fe cation: His-47, Glu-53, and His-91. Glu-53 contacts substrate. The substrate site is built by Arg-95 and Glu-105. Residues 161 to 177 are linker; that stretch reads PDQLLKEPPFPLSTRSI. Residues 178–286 form a domain B region; that stretch reads MEPMSLDAWL…QDPACKKPLG (109 aa).

This sequence belongs to the 3-HAO family. As to quaternary structure, monomer. It depends on Fe(2+) as a cofactor.

Its subcellular location is the cytoplasm. The protein localises to the cytosol. The enzyme catalyses 3-hydroxyanthranilate + O2 = (2Z,4Z)-2-amino-3-carboxymuconate 6-semialdehyde. The protein operates within cofactor biosynthesis; NAD(+) biosynthesis; quinolinate from L-kynurenine: step 3/3. In terms of biological role, catalyzes the oxidative ring opening of 3-hydroxyanthranilate to 2-amino-3-carboxymuconate semialdehyde, which spontaneously cyclizes to quinolinate. The sequence is that of 3-hydroxyanthranilate 3,4-dioxygenase from Homo sapiens (Human).